The following is a 652-amino-acid chain: Aspartate--tRNA ligase, mitochondrial (652 aa).

The transit peptide at 1–46 (MYLGSWLNRLGRGLSRPIGKTKQPIWGSLSRSLTLSSQRVPEFSSF) directs the protein to the mitochondrion. Position 218 is a phosphothreonine (threonine 218). Phosphoserine is present on serine 241. The segment at 243 to 246 (QQFK) is aspartate. Arginine 265 provides a ligand contact to L-aspartate. Residues 265–267 (RDE) and glutamate 534 contribute to the ATP site. Arginine 541 lines the L-aspartate pocket. 583 to 586 (GLDR) is an ATP binding site.

The protein belongs to the class-II aminoacyl-tRNA synthetase family. Type 1 subfamily. As to quaternary structure, homodimer.

Its subcellular location is the mitochondrion matrix. It is found in the mitochondrion membrane. It catalyses the reaction tRNA(Asp) + L-aspartate + ATP = L-aspartyl-tRNA(Asp) + AMP + diphosphate. Catalyzes the attachment of aspartate to tRNA(Asp) in a two-step reaction: aspartate is first activated by ATP to form Asp-AMP and then transferred to the acceptor end of tRNA(Asp). The protein is Aspartate--tRNA ligase, mitochondrial (Dars2) of Rattus norvegicus (Rat).